The sequence spans 137 residues: Large ribosomal subunit protein uL16c (137 aa).

The protein belongs to the universal ribosomal protein uL16 family. As to quaternary structure, part of the 50S ribosomal subunit.

The protein localises to the plastid. The protein is Large ribosomal subunit protein uL16c of Cuscuta reflexa (Southern Asian dodder).